Consider the following 707-residue polypeptide: Alpha-hemolysin translocation ATP-binding protein HlyB (707 aa).

In terms of domain architecture, Peptidase C39 spans S3–I125. H83 is a catalytic residue. An ABC transmembrane type-1 domain is found at F154–Q436. 5 helical membrane-spanning segments follow: residues L158–V178, L191–L211, A269–Y289, L295–L315, and V388–G408. An ABC transporter domain is found at I468–Q703. An ATP-binding site is contributed by G502–S509.

This sequence belongs to the ABC transporter superfamily. Protein-1 exporter (TC 3.A.1.109) family. Homodimer.

It is found in the cell inner membrane. Functionally, part of the ABC transporter complex HlyBD involved in hemolysin export. Transmembrane domains (TMD) form a pore in the inner membrane and the ATP-binding domain (NBD) is responsible for energy generation. This is Alpha-hemolysin translocation ATP-binding protein HlyB (hlyB) from Escherichia coli.